The following is a 306-amino-acid chain: Pantothenate kinase (306 aa).

91–98 provides a ligand contact to ATP; that stretch reads GSVAVGKS.

The protein belongs to the prokaryotic pantothenate kinase family.

The protein resides in the cytoplasm. It catalyses the reaction (R)-pantothenate + ATP = (R)-4'-phosphopantothenate + ADP + H(+). Its pathway is cofactor biosynthesis; coenzyme A biosynthesis; CoA from (R)-pantothenate: step 1/5. In Streptococcus suis (strain 98HAH33), this protein is Pantothenate kinase.